The chain runs to 430 residues: Tol-Pal system protein TolB (430 aa).

The N-terminal stretch at 1 to 21 (MKQAFRVALGFLVLWASVLHA) is a signal peptide.

This sequence belongs to the TolB family. As to quaternary structure, the Tol-Pal system is composed of five core proteins: the inner membrane proteins TolA, TolQ and TolR, the periplasmic protein TolB and the outer membrane protein Pal. They form a network linking the inner and outer membranes and the peptidoglycan layer.

The protein resides in the periplasm. In terms of biological role, part of the Tol-Pal system, which plays a role in outer membrane invagination during cell division and is important for maintaining outer membrane integrity. TolB occupies a key intermediary position in the Tol-Pal system because it communicates directly with both membrane-embedded components, Pal in the outer membrane and TolA in the inner membrane. The sequence is that of Tol-Pal system protein TolB from Yersinia enterocolitica serotype O:8 / biotype 1B (strain NCTC 13174 / 8081).